The sequence spans 357 residues: Phenylalanine--tRNA ligase alpha subunit (357 aa).

E257 contacts Mg(2+).

It belongs to the class-II aminoacyl-tRNA synthetase family. Phe-tRNA synthetase alpha subunit type 1 subfamily. As to quaternary structure, tetramer of two alpha and two beta subunits. Mg(2+) serves as cofactor.

It localises to the cytoplasm. It carries out the reaction tRNA(Phe) + L-phenylalanine + ATP = L-phenylalanyl-tRNA(Phe) + AMP + diphosphate + H(+). This chain is Phenylalanine--tRNA ligase alpha subunit, found in Ruegeria sp. (strain TM1040) (Silicibacter sp.).